The following is a 354-amino-acid chain: MGCTLSAEERAALERSKQIEKNLKEDGVTAAKDVKLLLLGAGESGKSTIVKQMKIIHEDGFSGEDVKQYKPVVYSNTIQSLAAIVRAMDTLGIEYGDKERRADAKMVCDVVSRMEDTEPYSPELLSAMVRLWADSGIQECFNRSREYQLNDSAKYYLDSLDRIGAPDYQPTEQDILRTRVKTTGIVETHFTFKNLHFRLFDVGGQRSERKKWWHCFEDVTAIIFCVALTGYDQVLHEDETTNRMHESLKLFDSICNNKWFTDTSIILFLNKKDIFQEKIKSSPLTICFPEYTGPNSFTEAVAHTQHQYESRNKSENKEIYTHITCATDTQNIQFVFDAVTDVIIAYNLRGCGLY.

Glycine 2 carries the N-myristoyl glycine lipid modification. Cysteine 3 carries the S-palmitoyl cysteine lipid modification. The G-alpha domain maps to 32 to 354 (KDVKLLLLGA…AYNLRGCGLY (323 aa)). Residues 35 to 48 (KLLLLGAGESGKST) form a G1 motif region. The GTP site is built by glutamate 43, lysine 46, serine 47, threonine 48, serine 152, leucine 176, arginine 177, threonine 178, and arginine 179. A Mg(2+)-binding site is contributed by serine 47. The G2 motif stretch occupies residues 174–182 (DILRTRVKT). A Mg(2+)-binding site is contributed by threonine 182. Residues 197–206 (FRLFDVGGQR) form a G3 motif region. The tract at residues 266–273 (ILFLNKKD) is G4 motif. Positions 270, 273, and 325 each coordinate GTP. The segment at 324–329 (TCATDT) is G5 motif.

This sequence belongs to the G-alpha family. G(i/o/t/z) subfamily. As to quaternary structure, g proteins are composed of 3 units; alpha, beta and gamma.

The catalysed reaction is GTP + H2O = GDP + phosphate + H(+). Guanine nucleotide-binding proteins (G proteins) function as transducers downstream of G protein-coupled receptors (GPCRs) in numerous signaling cascades. The alpha chain contains the guanine nucleotide binding site and alternates between an active, GTP-bound state and an inactive, GDP-bound state. Signaling by an activated GPCR promotes GDP release and GTP binding. The alpha subunit has a low GTPase activity that converts bound GTP to GDP, thereby terminating the signal. Both GDP release and GTP hydrolysis are modulated by numerous regulatory proteins. Signaling is mediated via effector proteins, such as adenylate cyclase. Inhibits adenylate cyclase activity, leading to decreased intracellular cAMP levels. The protein is Guanine nucleotide-binding protein G(o) subunit alpha (gna0) of Xenopus laevis (African clawed frog).